We begin with the raw amino-acid sequence, 734 residues long: DNA-binding protein RFX2 (734 aa).

The segment covering 1 to 23 (MQRSEGGSETPSTVALRTSTSAQ) has biased composition (polar residues). A disordered region spans residues 1–31 (MQRSEGGSETPSTVALRTSTSAQAPVVQPVP). Residues 204–279 (HLQWLLDNYE…YHYYGIRLKP (76 aa)) constitute a DNA-binding region (RFX-type winged-helix). The segment at 694-722 (DTSFSDDMTSDGDMSRMSERSLTEPAVKR) is disordered. Residues 706–722 (DMSRMSERSLTEPAVKR) are compositionally biased toward basic and acidic residues.

Belongs to the RFX family. Homodimer. Heterodimer; heterodimerizes with other rfx proteins.

The protein resides in the nucleus. It is found in the cytoplasm. In terms of biological role, transcription factor that acts as a key regulator of ciliogenesis. Specifically regulates expression of genes required for cilium assembly and function. Recognizes and binds the X-box, a regulatory motif with DNA sequence 5'-GTNRCC(0-3N)RGYAAC-3' present on promoters. In Danio rerio (Zebrafish), this protein is DNA-binding protein RFX2 (rfx2).